The sequence spans 431 residues: E3 ubiquitin-protein ligase marc-3 (431 aa).

The RING-CH-type zinc-finger motif lies at 5–74; it reads NASLGPAVCR…EICKFAFKIK (70 aa). Zn(2+) is bound by residues Cys-13, Cys-16, Cys-38, Cys-40, His-48, Cys-51, Cys-64, and Cys-67. The next 2 helical transmembrane spans lie at 98 to 118 and 157 to 177; these read PFID…GVFM and LFLF…VSAL. Disordered regions lie at residues 267–289 and 327–349; these read TSPD…FGRR and SRAT…RDMR. Residues 273 to 282 are compositionally biased toward basic and acidic residues; that stretch reads NTHHHDESRN.

It is found in the cell membrane. The protein resides in the endosome membrane. The enzyme catalyses S-ubiquitinyl-[E2 ubiquitin-conjugating enzyme]-L-cysteine + [acceptor protein]-L-lysine = [E2 ubiquitin-conjugating enzyme]-L-cysteine + N(6)-ubiquitinyl-[acceptor protein]-L-lysine.. The protein operates within protein modification; protein ubiquitination. Its function is as follows. E3 ubiquitin-protein ligase which positively regulates the fast polyspermy block during fertilization, preventing entry of more than one sperm into the oocyte. After fertilization, required in the zygote for the selective degradation of a subset of maternal membrane proteins including cav-1, chs-1 and rme-2, probably by mediating their K63-linked polyubiquitination. This is E3 ubiquitin-protein ligase marc-3 from Caenorhabditis elegans.